Reading from the N-terminus, the 265-residue chain is Glutamate racemase (265 aa).

Residues 10 to 11 and 42 to 43 each bind substrate; these read DS and YG. Cysteine 73 serves as the catalytic Proton donor/acceptor. Residue 74-75 coordinates substrate; sequence NT. The active-site Proton donor/acceptor is the cysteine 184. Substrate is bound at residue 185 to 186; sequence TH.

This sequence belongs to the aspartate/glutamate racemases family.

It catalyses the reaction L-glutamate = D-glutamate. Its pathway is cell wall biogenesis; peptidoglycan biosynthesis. Provides the (R)-glutamate required for cell wall biosynthesis. The protein is Glutamate racemase of Pediococcus pentosaceus (strain ATCC 25745 / CCUG 21536 / LMG 10740 / 183-1w).